A 481-amino-acid chain; its full sequence is Aspartyl/glutamyl-tRNA(Asn/Gln) amidotransferase subunit B (481 aa).

It belongs to the GatB/GatE family. GatB subfamily. In terms of assembly, heterotrimer of A, B and C subunits.

It carries out the reaction L-glutamyl-tRNA(Gln) + L-glutamine + ATP + H2O = L-glutaminyl-tRNA(Gln) + L-glutamate + ADP + phosphate + H(+). It catalyses the reaction L-aspartyl-tRNA(Asn) + L-glutamine + ATP + H2O = L-asparaginyl-tRNA(Asn) + L-glutamate + ADP + phosphate + 2 H(+). Allows the formation of correctly charged Asn-tRNA(Asn) or Gln-tRNA(Gln) through the transamidation of misacylated Asp-tRNA(Asn) or Glu-tRNA(Gln) in organisms which lack either or both of asparaginyl-tRNA or glutaminyl-tRNA synthetases. The reaction takes place in the presence of glutamine and ATP through an activated phospho-Asp-tRNA(Asn) or phospho-Glu-tRNA(Gln). In Prosthecochloris aestuarii (strain DSM 271 / SK 413), this protein is Aspartyl/glutamyl-tRNA(Asn/Gln) amidotransferase subunit B.